The chain runs to 368 residues: ATP-dependent (S)-NAD(P)H-hydrate dehydratase (368 aa).

In terms of domain architecture, YjeF C-terminal spans Leu13 to Leu357. Residues Gly125 and Asn178 to Arg184 each bind (6S)-NADPHX. Residues Lys231–Asp235 and Gly250–Gly259 each bind ATP. Asp260 contacts (6S)-NADPHX.

This sequence belongs to the NnrD/CARKD family. Requires Mg(2+) as cofactor.

It localises to the cytoplasm. The catalysed reaction is (6S)-NADHX + ATP = ADP + phosphate + NADH + H(+). It catalyses the reaction (6S)-NADPHX + ATP = ADP + phosphate + NADPH + H(+). In terms of biological role, catalyzes the dehydration of the S-form of NAD(P)HX at the expense of ATP, which is converted to ADP. Together with NAD(P)HX epimerase, which catalyzes the epimerization of the S- and R-forms, the enzyme allows the repair of both epimers of NAD(P)HX, a damaged form of NAD(P)H that is a result of enzymatic or heat-dependent hydration. This Aspergillus fumigatus (strain ATCC MYA-4609 / CBS 101355 / FGSC A1100 / Af293) (Neosartorya fumigata) protein is ATP-dependent (S)-NAD(P)H-hydrate dehydratase.